A 314-amino-acid polypeptide reads, in one-letter code: tRNA dimethylallyltransferase (314 aa).

G8 to S15 serves as a coordination point for ATP. T10 to S15 contacts substrate.

The protein belongs to the IPP transferase family. Monomer. Requires Mg(2+) as cofactor.

It carries out the reaction adenosine(37) in tRNA + dimethylallyl diphosphate = N(6)-dimethylallyladenosine(37) in tRNA + diphosphate. Its function is as follows. Catalyzes the transfer of a dimethylallyl group onto the adenine at position 37 in tRNAs that read codons beginning with uridine, leading to the formation of N6-(dimethylallyl)adenosine (i(6)A). The protein is tRNA dimethylallyltransferase of Mycobacterium tuberculosis (strain ATCC 25177 / H37Ra).